We begin with the raw amino-acid sequence, 174 residues long: Large ribosomal subunit protein uL6 (174 aa).

Belongs to the universal ribosomal protein uL6 family. As to quaternary structure, part of the 50S ribosomal subunit.

This protein binds to the 23S rRNA, and is important in its secondary structure. It is located near the subunit interface in the base of the L7/L12 stalk, and near the tRNA binding site of the peptidyltransferase center. In Acidithiobacillus ferrooxidans (strain ATCC 23270 / DSM 14882 / CIP 104768 / NCIMB 8455) (Ferrobacillus ferrooxidans (strain ATCC 23270)), this protein is Large ribosomal subunit protein uL6.